Reading from the N-terminus, the 363-residue chain is 3-isopropylmalate dehydrogenase (363 aa).

78–91 contacts NAD(+); sequence GKKWDDLPINQRPE. 4 residues coordinate substrate: Arg-99, Arg-109, Arg-138, and Asp-227. Asp-227, Asp-251, and Asp-255 together coordinate Mg(2+). 285–297 provides a ligand contact to NAD(+); sequence GSAPDIEGKNIAN.

It belongs to the isocitrate and isopropylmalate dehydrogenases family. LeuB type 1 subfamily. In terms of assembly, homodimer. It depends on Mg(2+) as a cofactor. Mn(2+) is required as a cofactor.

It localises to the cytoplasm. It carries out the reaction (2R,3S)-3-isopropylmalate + NAD(+) = 4-methyl-2-oxopentanoate + CO2 + NADH. The protein operates within amino-acid biosynthesis; L-leucine biosynthesis; L-leucine from 3-methyl-2-oxobutanoate: step 3/4. Functionally, catalyzes the oxidation of 3-carboxy-2-hydroxy-4-methylpentanoate (3-isopropylmalate) to 3-carboxy-4-methyl-2-oxopentanoate. The product decarboxylates to 4-methyl-2 oxopentanoate. The chain is 3-isopropylmalate dehydrogenase from Buchnera aphidicola subsp. Uroleucon rudbeckiae.